We begin with the raw amino-acid sequence, 634 residues long: Kelch-like protein 31 (634 aa).

Ala-2 bears the N,N,N-trimethylalanine mark. A BTB domain is found at Cys-73 to Leu-137. Residues Cys-172–Gln-273 form the BACK domain. Kelch repeat units lie at residues Val-317–Gly-365, Phe-366–Gly-419, Leu-420–Gly-466, Val-468–Asp-513, Val-515–Gly-565, and Ala-567–Met-614.

In terms of processing, N-terminus is methylated by METTL11A/NTM1. Strongly expressed in skeletal muscle and weakly in heart. According to PubMed:15302408, not expressed in other tissues. According to PubMed:18719355, abundantly expressed in both embryonic skeletal and heart tissues.

Functionally, transcriptional repressor in MAPK/JNK signaling pathway to regulate cellular functions. Overexpression inhibits the transcriptional activities of both the TPA-response element (TRE) and serum response element (SRE). The polypeptide is Kelch-like protein 31 (KLHL31) (Homo sapiens (Human)).